A 701-amino-acid polypeptide reads, in one-letter code: Octapeptide-repeat antigen (701 aa).

Residues Asn-40, Asn-41, Asn-76, Asn-111, Asn-127, Asn-139, Asn-181, Asn-189, Asn-311, Asn-334, Asn-344, Asn-477, and Asn-557 are each glycosylated (N-linked (GlcNAc...) asparagine). Residues 120 to 140 are disordered; the sequence is IENEEKSNGSRKSSNKQKYNE. A disordered region spans residues 641 to 701; sequence LSGSSTGSMN…IKSGSKDHIK (61 aa). Residues 642–655 are compositionally biased toward low complexity; the sequence is SGSSTGSMNNGKSG. Tandem repeats lie at residues 653–660, 661–668, 669–676, 677–684, 685–692, and 693–700. The 6 X 8 AA approximate tandem repeats stretch occupies residues 653-700; sequence KSGSKSDIKGGSKDDIKSGSKDDIKSGSKADIKSGSKDDIKSGSKDHI. Residues 656-701 show a composition bias toward basic and acidic residues; sequence SKSDIKGGSKDDIKSGSKDDIKSGSKADIKSGSKDDIKSGSKDHIK.

The protein belongs to the ATP-dependent AMP-binding enzyme family.

It localises to the parasitophorous vacuole. The sequence is that of Octapeptide-repeat antigen from Plasmodium falciparum (isolate NF7 / Ghana).